Reading from the N-terminus, the 335-residue chain is Syntaxin-18 (335 aa).

Residues 1 to 309 (MAVDITLLFR…EDIREAIKNN (309 aa)) lie on the Cytoplasmic side of the membrane. Over residues 168 to 208 (KLEPEPNTKTRESTSSEKVSRSPSKDSEENPATEERPEKIL) the composition is skewed to basic and acidic residues. Residues 168–226 (KLEPEPNTKTRESTSSEKVSRSPSKDSEENPATEERPEKILAETQPELGTWGDGKGEDE) form a disordered region. The 63-residue stretch at 243–305 (IGEMNSLFDE…KEGNEDIREA (63 aa)) folds into the t-SNARE coiled-coil homology domain. The chain crosses the membrane as a helical; Anchor for type IV membrane protein span at residues 310–330 (AGFRVWILFFLVMCSFSLLFL). At 331 to 335 (DWYDS) the chain is on the vesicular side.

The protein belongs to the syntaxin family. Component of a SNARE complex consisting of STX18, USE1L, BNIP1/SEC20L, and SEC22B. RINT1/TIP20L and ZW10 are associated with the complex through interaction with BNIP1/SEC20L. Interacts directly with USE1L and BNIP1/SEC20L.

The protein resides in the endoplasmic reticulum membrane. The protein localises to the golgi apparatus membrane. Functionally, syntaxin that may be involved in targeting and fusion of Golgi-derived retrograde transport vesicles with the ER. In Pongo abelii (Sumatran orangutan), this protein is Syntaxin-18 (STX18).